Reading from the N-terminus, the 165-residue chain is Chorismate pyruvate-lyase (165 aa).

M35, R77, L115, and E156 together coordinate substrate.

It belongs to the UbiC family. As to quaternary structure, monomer.

The protein localises to the cytoplasm. The catalysed reaction is chorismate = 4-hydroxybenzoate + pyruvate. Its pathway is cofactor biosynthesis; ubiquinone biosynthesis. Functionally, removes the pyruvyl group from chorismate, with concomitant aromatization of the ring, to provide 4-hydroxybenzoate (4HB) for the ubiquinone pathway. This Escherichia coli O157:H7 protein is Chorismate pyruvate-lyase.